Consider the following 416-residue polypeptide: E3 ubiquitin-protein ligase makorin-2 (416 aa).

2 consecutive C3H1-type zinc fingers follow at residues 2–29 (STKQ…HDLA) and 31–58 (SKPS…HTRP). Over residues 113-122 (NLSGMAERKT) the composition is skewed to basic and acidic residues. A disordered region spans residues 113-142 (NLSGMAERKTQPSMVSNPGSCSDPQPSPEM). Residues 123 to 136 (QPSMVSNPGSCSDP) show a composition bias toward polar residues. At Ser-139 the chain carries Phosphoserine. The C3H1-type 3 zinc finger occupies 165-192 (SNEQQLCPYAAAGECRFGDACVYLHGEV). The tract at residues 193–222 (CEICRLQVLHPFDPEQRKAHEKICMLTFEH) is makorin-type Cys-His. The segment at 238–292 (CSICMEVILEKASASERRFGILSNCNHTYCLSCIRQWRCAKQFENPIIKSCPECR) adopts an RING-type zinc-finger fold. The C3H1-type 4 zinc-finger motif lies at 321–350 (GMGKKACKYFEQGKGTCPFGSKCLYRHAYP).

As to quaternary structure, interacts with PDLIM2 (via LIM zinc-binding domain). Interacts with RELA. Expressed in sperm, with significantly reduced expression in sperm of patients with oligoasthenoteratozoospermia (at protein level). Widely expressed with expression in testis, ovary, small intestine, colon, peripheral blood leukocytes, fetal liver, bone marrow, thymus, lymph node and spleen.

It localises to the cytoplasm. The protein localises to the nucleus. It carries out the reaction S-ubiquitinyl-[E2 ubiquitin-conjugating enzyme]-L-cysteine + [acceptor protein]-L-lysine = [E2 ubiquitin-conjugating enzyme]-L-cysteine + N(6)-ubiquitinyl-[acceptor protein]-L-lysine.. Its pathway is protein modification; protein ubiquitination. In terms of biological role, E3 ubiquitin ligase catalyzing the covalent attachment of ubiquitin moieties onto substrate proteins. Promotes the polyubiquitination and proteasome-dependent degradation of RELA/p65, thereby suppressing RELA-mediated NF-kappaB transactivation and negatively regulating inflammatory responses. Plays a role in the regulation of spermiation and in male fertility. In Homo sapiens (Human), this protein is E3 ubiquitin-protein ligase makorin-2 (MKRN2).